The primary structure comprises 308 residues: uncharacterized protein (308 aa).

The region spanning 6–234 (LHIEGLDKKI…TEKAIIEVQP (229 aa)) is the ABC transporter domain. 38-45 (GPNGSGKT) contributes to the ATP binding site.

Belongs to the ABC transporter superfamily.

This is an uncharacterized protein from Bacillus subtilis (strain 168).